The primary structure comprises 143 residues: Transcriptional regulator MraZ (143 aa).

SpoVT-AbrB domains lie at Glu5–Glu47 and Ala76–Arg119.

The protein belongs to the MraZ family. Forms oligomers.

Its subcellular location is the cytoplasm. The protein resides in the nucleoid. This chain is Transcriptional regulator MraZ, found in Halothermothrix orenii (strain H 168 / OCM 544 / DSM 9562).